We begin with the raw amino-acid sequence, 487 residues long: UDP-N-acetylmuramoyl-L-alanyl-D-glutamate--2,6-diaminopimelate ligase (487 aa).

Residue Ser30 coordinates UDP-N-acetyl-alpha-D-muramoyl-L-alanyl-D-glutamate. 109-115 (GTNGKTS) contributes to the ATP binding site. UDP-N-acetyl-alpha-D-muramoyl-L-alanyl-D-glutamate is bound by residues 151 to 152 (TT), Ser178, and Arg186. Position 218 is an N6-carboxylysine (Lys218). Meso-2,6-diaminopimelate-binding positions include Arg379, 403 to 406 (DNPR), Gly455, and Glu459. The Meso-diaminopimelate recognition motif motif lies at 403-406 (DNPR).

This sequence belongs to the MurCDEF family. MurE subfamily. Mg(2+) is required as a cofactor. In terms of processing, carboxylation is probably crucial for Mg(2+) binding and, consequently, for the gamma-phosphate positioning of ATP.

The protein localises to the cytoplasm. It carries out the reaction UDP-N-acetyl-alpha-D-muramoyl-L-alanyl-D-glutamate + meso-2,6-diaminopimelate + ATP = UDP-N-acetyl-alpha-D-muramoyl-L-alanyl-gamma-D-glutamyl-meso-2,6-diaminopimelate + ADP + phosphate + H(+). The protein operates within cell wall biogenesis; peptidoglycan biosynthesis. In terms of biological role, catalyzes the addition of meso-diaminopimelic acid to the nucleotide precursor UDP-N-acetylmuramoyl-L-alanyl-D-glutamate (UMAG) in the biosynthesis of bacterial cell-wall peptidoglycan. In Alkaliphilus oremlandii (strain OhILAs) (Clostridium oremlandii (strain OhILAs)), this protein is UDP-N-acetylmuramoyl-L-alanyl-D-glutamate--2,6-diaminopimelate ligase.